A 380-amino-acid polypeptide reads, in one-letter code: tRNA-specific 2-thiouridylase MnmA (380 aa).

Residues 26 to 33 (AMSGGVDS) and Leu-52 contribute to the ATP site. Catalysis depends on Cys-120, which acts as the Nucleophile. Residues Cys-120 and Cys-217 are joined by a disulfide bond. Gly-144 contributes to the ATP binding site. The tract at residues 166-168 (RDQ) is interaction with tRNA. The active-site Cysteine persulfide intermediate is Cys-217.

The protein belongs to the MnmA/TRMU family.

Its subcellular location is the cytoplasm. It carries out the reaction S-sulfanyl-L-cysteinyl-[protein] + uridine(34) in tRNA + AH2 + ATP = 2-thiouridine(34) in tRNA + L-cysteinyl-[protein] + A + AMP + diphosphate + H(+). Catalyzes the 2-thiolation of uridine at the wobble position (U34) of tRNA, leading to the formation of s(2)U34. This Jannaschia sp. (strain CCS1) protein is tRNA-specific 2-thiouridylase MnmA.